We begin with the raw amino-acid sequence, 111 residues long: Large ribosomal subunit protein uL22 (111 aa).

This sequence belongs to the universal ribosomal protein uL22 family. Part of the 50S ribosomal subunit.

Functionally, this protein binds specifically to 23S rRNA; its binding is stimulated by other ribosomal proteins, e.g. L4, L17, and L20. It is important during the early stages of 50S assembly. It makes multiple contacts with different domains of the 23S rRNA in the assembled 50S subunit and ribosome. In terms of biological role, the globular domain of the protein is located near the polypeptide exit tunnel on the outside of the subunit, while an extended beta-hairpin is found that lines the wall of the exit tunnel in the center of the 70S ribosome. The polypeptide is Large ribosomal subunit protein uL22 (Thermoanaerobacter pseudethanolicus (strain ATCC 33223 / 39E) (Clostridium thermohydrosulfuricum)).